The primary structure comprises 105 residues: Nitrogen fixation nifHD region GlnB-like protein 1 (105 aa).

This sequence belongs to the P(II) protein family.

Its function is as follows. Could be involved in the regulation of nitrogen fixation. This is Nitrogen fixation nifHD region GlnB-like protein 1 (glnBA) from Methanobacterium ivanovii.